Here is a 427-residue protein sequence, read N- to C-terminus: Glutamate-1-semialdehyde 2,1-aminomutase 1 (427 aa).

At lysine 267 the chain carries N6-(pyridoxal phosphate)lysine.

It belongs to the class-III pyridoxal-phosphate-dependent aminotransferase family. HemL subfamily. As to quaternary structure, homodimer. Requires pyridoxal 5'-phosphate as cofactor.

Its subcellular location is the cytoplasm. The catalysed reaction is (S)-4-amino-5-oxopentanoate = 5-aminolevulinate. The protein operates within porphyrin-containing compound metabolism; protoporphyrin-IX biosynthesis; 5-aminolevulinate from L-glutamyl-tRNA(Glu): step 2/2. This chain is Glutamate-1-semialdehyde 2,1-aminomutase 1, found in Staphylococcus epidermidis (strain ATCC 35984 / DSM 28319 / BCRC 17069 / CCUG 31568 / BM 3577 / RP62A).